A 239-amino-acid chain; its full sequence is Leucine-rich repeat-containing protein 57 (239 aa).

A lipid anchor (N-myristoyl glycine) is attached at glycine 2. LRR repeat units lie at residues 39–60 (NLRTIDLSNNKIDSLPPLIIGK), 63–85 (LLKSLSLNNNKLTVLPDELCNLK), 86–107 (KLETLSLNNNHLRELPSTFGQL), 109–130 (ALKTLSLSGNQLGALPPQLCCL), 132–153 (HLDVVDLSKNQIRSIPDTVGEL), 154–175 (QAIELNLNQNQISQLSVKISCC), 177–197 (RLKVLRLEENCLELSMLPQSI), and 202–222 (QICLLAVEGNLFEIKKFRELE).

It is found in the membrane. This is Leucine-rich repeat-containing protein 57 (Lrrc57) from Mus musculus (Mouse).